Consider the following 166-residue polypeptide: C-signal (166 aa).

Post-translationally, the mature C-signal (p17) is derived from the precursor sequence (p25) by proteolytic cleavage. The subtilisin-like protease PopC is directly responsible for cleavage of p25 to p17. The cleavage site is probably located between amino acid residues 60 and 68 in p25.

It localises to the secreted. The protein localises to the cell outer membrane. Its activity is regulated as follows. Synthesized as a precursor protein (p25), which is cleaved after secretion to generate the mature active C-signal (p17). The p25 precursor purified from M.xanthus cells does not display C-signal activity. In terms of biological role, cell-cell signaling protein required for fruiting body formation, a multicellular developmental program that is induced in response to starvation. Necessary for rippling, cellular aggregation, spore differentiation and for gene expression that is initiated after 6 hours of starvation. In starving cells, the C-signal directly induces aggregation and sporulation, which are induced at distinct threshold levels of C-signaling. Contact with C-signaling induces cells to glide with high speed and low stop and reversal frequencies toward aggregation centers. The C-signal acts as a morphogen and induces distinct events at distinct threshold levels. A regulated increase in the level of C-signaling during development ensures the correct temporal order of aggregation and sporulation. This Myxococcus xanthus protein is C-signal.